We begin with the raw amino-acid sequence, 262 residues long: Global transcriptional regulator CodY (262 aa).

Residues 1 to 159 (MATLLEKTRK…ATTVIGVQLS (159 aa)) are GAF domain. The H-T-H motif DNA-binding region spans 207-226 (ASVIADKIGITRSVIVNALR).

This sequence belongs to the CodY family.

The protein resides in the cytoplasm. Its function is as follows. DNA-binding global transcriptional regulator which is involved in the adaptive response to starvation and acts by directly or indirectly controlling the expression of numerous genes in response to nutrient availability. During rapid exponential growth, CodY is highly active and represses genes whose products allow adaptation to nutrient depletion. This Lactococcus lactis subsp. lactis (strain IL1403) (Streptococcus lactis) protein is Global transcriptional regulator CodY.